Consider the following 78-residue polypeptide: MSRKCQLTGKKANNGYSVSHSHIRTHKLQHANLQWKKVWWPQGKKWVKLKLSTKAIKTLQSKGIQAMAKQAGIDLNKF.

The protein belongs to the bacterial ribosomal protein bL28 family.

The protein is Large ribosomal subunit protein bL28 of Trichodesmium erythraeum (strain IMS101).